Here is a 224-residue protein sequence, read N- to C-terminus: Pleckstrin homology domain-containing family B member 2 (224 aa).

A PH domain is found at Ala2–Thr109. Position 20 (Lys20) interacts with a 1,2-diacyl-sn-glycero-3-phospho-L-serine.

It localises to the recycling endosome membrane. Functionally, involved in retrograde transport of recycling endosomes. In Gallus gallus (Chicken), this protein is Pleckstrin homology domain-containing family B member 2 (PLEKHB2).